A 264-amino-acid polypeptide reads, in one-letter code: Hydroxyethylthiazole kinase (264 aa).

Position 41 (M41) interacts with substrate. The ATP site is built by K117 and S163. G190 lines the substrate pocket.

The protein belongs to the Thz kinase family. Mg(2+) serves as cofactor.

The enzyme catalyses 5-(2-hydroxyethyl)-4-methylthiazole + ATP = 4-methyl-5-(2-phosphooxyethyl)-thiazole + ADP + H(+). Its pathway is cofactor biosynthesis; thiamine diphosphate biosynthesis; 4-methyl-5-(2-phosphoethyl)-thiazole from 5-(2-hydroxyethyl)-4-methylthiazole: step 1/1. Catalyzes the phosphorylation of the hydroxyl group of 4-methyl-5-beta-hydroxyethylthiazole (THZ). The chain is Hydroxyethylthiazole kinase from Thermoanaerobacter pseudethanolicus (strain ATCC 33223 / 39E) (Clostridium thermohydrosulfuricum).